We begin with the raw amino-acid sequence, 128 residues long: Sulfurtransferase TusD (128 aa).

Cysteine 78 serves as the catalytic Cysteine persulfide intermediate.

This sequence belongs to the DsrE/TusD family. Heterohexamer, formed by a dimer of trimers. The hexameric TusBCD complex contains 2 copies each of TusB, TusC and TusD. The TusBCD complex interacts with TusE.

It localises to the cytoplasm. In terms of biological role, part of a sulfur-relay system required for 2-thiolation of 5-methylaminomethyl-2-thiouridine (mnm(5)s(2)U) at tRNA wobble positions. Accepts sulfur from TusA and transfers it in turn to TusE. This chain is Sulfurtransferase TusD, found in Shigella dysenteriae serotype 1 (strain Sd197).